The primary structure comprises 154 residues: NADPH-dependent 7-cyano-7-deazaguanine reductase (154 aa).

Over residues M1–G13 the composition is skewed to polar residues. The interval M1–V30 is disordered. The segment covering D17–L27 has biased composition (basic and acidic residues). The Thioimide intermediate role is filled by C52. D59 (proton donor) is an active-site residue. Residues V74–S76 and H93–E94 each bind substrate.

It belongs to the GTP cyclohydrolase I family. QueF type 1 subfamily.

Its subcellular location is the cytoplasm. The enzyme catalyses 7-aminomethyl-7-carbaguanine + 2 NADP(+) = 7-cyano-7-deazaguanine + 2 NADPH + 3 H(+). Its pathway is tRNA modification; tRNA-queuosine biosynthesis. In terms of biological role, catalyzes the NADPH-dependent reduction of 7-cyano-7-deazaguanine (preQ0) to 7-aminomethyl-7-deazaguanine (preQ1). The polypeptide is NADPH-dependent 7-cyano-7-deazaguanine reductase (Agrobacterium fabrum (strain C58 / ATCC 33970) (Agrobacterium tumefaciens (strain C58))).